The following is a 205-amino-acid chain: Ephrin-A1 (205 aa).

Residues 1–17 form the signal peptide; sequence MEFLWAPLLGLCCSLAA. One can recognise an Ephrin RBD domain in the interval 18-161; sequence ADRHIVFWNS…THNPQAHVNP (144 aa). Asn-26 carries N-linked (GlcNAc...) asparagine glycosylation. Cystine bridges form between Cys-51-Cys-92 and Cys-80-Cys-140. Ser-182 is lipidated: GPI-anchor amidated serine. The propeptide at 183-205 is removed in mature form; it reads AAPRLFPLVWAVLLLPLLLLQSQ.

The protein belongs to the ephrin family. In terms of assembly, monomer. Homodimer. Forms heterodimers with EPHA2. Binds to the receptor tyrosine kinases EPHA2, EPHA3, EPHA4, EPHA5, EPHA6 and EPHA7. Also binds with low affinity to EPHA1. In terms of processing, undergoes proteolysis by a metalloprotease to give rise to a soluble monomeric form. Post-translationally, N-Glycosylation is required for binding to EPHA2 receptor and inducing its internalization. As to expression, expressed in myogenic progenitor cells.

The protein resides in the cell membrane. It localises to the secreted. Cell surface GPI-bound ligand for Eph receptors, a family of receptor tyrosine kinases which are crucial for migration, repulsion and adhesion during neuronal, vascular and epithelial development. Binds promiscuously Eph receptors residing on adjacent cells, leading to contact-dependent bidirectional signaling into neighboring cells. Plays an important role in angiogenesis and tumor neovascularization. The recruitment of VAV2, VAV3 and PI3-kinase p85 subunit by phosphorylated EPHA2 is critical for EFNA1-induced RAC1 GTPase activation and vascular endothelial cell migration and assembly. Exerts anti-oncogenic effects in tumor cells through activation and down-regulation of EPHA2. Activates EPHA2 by inducing tyrosine phosphorylation which leads to its internalization and degradation. Acts as a negative regulator in the tumorigenesis of gliomas by down-regulating EPHA2 and FAK. Can evoke collapse of embryonic neuronal growth cone and regulates dendritic spine morphogenesis. The polypeptide is Ephrin-A1 (Efna1) (Mus musculus (Mouse)).